The chain runs to 301 residues: MGPYLSQPNKNKTTTSGEGKSIIFAASEMQGWRNTMEDAHIHVCDLQQDLSIFGVFDGHGGKEVAQFVEKHFIEELQKNKNFKDQKFEDALRETFLKMDELLLTPEGQKEIIQIKGGDDEASYAGCTANVALFHKNVLYVANAGDSRSVLCRNNTNYDMSVDHKPDNYEEKSRIERAGGFVSDGRVNGNLNLSRALGDLEYKRDSKLRSNEQLIIALPDIKKVELNQTDKFLLMGCDGVFETLDHQDLLKFINQKLGNQQITPQLLGRVAEDLLDNLIAPDTSAGTGCDNMTTLIIYLKGK.

Polar residues predominate over residues 1 to 18; sequence MGPYLSQPNKNKTTTSGE. The segment at 1–20 is disordered; sequence MGPYLSQPNKNKTTTSGEGK. In terms of domain architecture, PPM-type phosphatase spans 23–298; it reads IFAASEMQGW…DNMTTLIIYL (276 aa). Mn(2+) is bound by residues Asp57, Gly58, Asp237, and Asp289.

It belongs to the PP2C family. The cofactor is Mg(2+). Requires Mn(2+) as cofactor.

Its subcellular location is the membrane. It carries out the reaction O-phospho-L-seryl-[protein] + H2O = L-seryl-[protein] + phosphate. The catalysed reaction is O-phospho-L-threonyl-[protein] + H2O = L-threonyl-[protein] + phosphate. Enzyme with a broad specificity. This chain is Probable protein phosphatase 2C 4, found in Paramecium tetraurelia.